Reading from the N-terminus, the 258-residue chain is Regulatory protein RecX (258 aa).

It belongs to the RecX family.

The protein localises to the cytoplasm. Functionally, modulates RecA activity. This chain is Regulatory protein RecX, found in Streptococcus thermophilus (strain ATCC BAA-491 / LMD-9).